The chain runs to 351 residues: Tetraacyldisaccharide 4'-kinase (351 aa).

Residue 47–54 (KAGGTGKT) participates in ATP binding.

The protein belongs to the LpxK family.

The catalysed reaction is a lipid A disaccharide + ATP = a lipid IVA + ADP + H(+). Its pathway is glycolipid biosynthesis; lipid IV(A) biosynthesis; lipid IV(A) from (3R)-3-hydroxytetradecanoyl-[acyl-carrier-protein] and UDP-N-acetyl-alpha-D-glucosamine: step 6/6. Functionally, transfers the gamma-phosphate of ATP to the 4'-position of a tetraacyldisaccharide 1-phosphate intermediate (termed DS-1-P) to form tetraacyldisaccharide 1,4'-bis-phosphate (lipid IVA). This chain is Tetraacyldisaccharide 4'-kinase, found in Cytophaga hutchinsonii (strain ATCC 33406 / DSM 1761 / CIP 103989 / NBRC 15051 / NCIMB 9469 / D465).